Consider the following 338-residue polypeptide: Phosphatidate cytidylyltransferase, mitochondrial (338 aa).

Belongs to the TAM41 family. It depends on Mg(2+) as a cofactor.

The protein resides in the mitochondrion inner membrane. The catalysed reaction is a 1,2-diacyl-sn-glycero-3-phosphate + CTP + H(+) = a CDP-1,2-diacyl-sn-glycerol + diphosphate. It functions in the pathway phospholipid metabolism; CDP-diacylglycerol biosynthesis; CDP-diacylglycerol from sn-glycerol 3-phosphate: step 3/3. Functionally, catalyzes the conversion of phosphatidic acid (PA) to CDP-diacylglycerol (CDP-DAG), an essential intermediate in the synthesis of phosphatidylglycerol, cardiolipin and phosphatidylinositol. The protein is Phosphatidate cytidylyltransferase, mitochondrial (tamm41) of Danio rerio (Zebrafish).